Reading from the N-terminus, the 786-residue chain is MASKSNKQVTVEVSNNGRSRSKSRARSQSRGRDKSVKITVNSRNRARRQPGRDKRQSSQRVRNIVNKQLRKQGVTGPKPAICQRATATLGTVGSNTSGTTEIEACILLNPVLVKDATGSTQFGPVQALGAQYSMWKLKYLNVKLTSMVGASAVNGTVSGVSLNPTTTPTSTSWSGLGARKHLDVTVGKNATFKLKPSDLGGPRDGWWLTNTNDNASDTLGPSIEIHTLGRTMSSYKNEQFTGGLFLVELASEWCFTGYAANPNLVNLVKSTDNQVSVTFEGSAGSPLIMNVPEGSHFARTVLARSTTPTTLARAGERTTSDTVWQVLNTAVSAAELVTPPPFNWLVKGGWWFVKLIAGRTRTGSRSFYVYPSYQDALSNKPALCTGSTPGGMRTRNPVTTTLQFTQMNQPSLGHGEAPAAFGRSIPAPGEEFKVVLTFGAPMSPNANNKQTWVNKPLDAPSGHYNVKIAKDVDHYLTMQGFTSIASVDWYTIDFQPSEAPAPIQGLQVLVNSSKKADVYAIKQFVTAQTNNKHQVTSLFLVKVTTGFQVNNYLSYFYRASATGDATTNLLVRGDTYTAGISFTQGGWYLLTNTSIVDGAMPPGWVWNNVELKTNTAYHMDKGLVHLIMPLPESTQMCYEMLTSIPRSRASGHGYESDNTEYLDAPDSADQFKEDIETDTDIESTEDEDEADRFDIIDTSDEEDENETDRVTLLSTLVNQGMTMTRATRIARRAFPTLSDRIKRGVYMDLLVSGASPGNAWSHACEEARKAAGEINPCTSGSRGHAE.

Over residues 1–13 the composition is skewed to polar residues; it reads MASKSNKQVTVEV. The tract at residues 1–60 is disordered; sequence MASKSNKQVTVEVSNNGRSRSKSRARSQSRGRDKSVKITVNSRNRARRQPGRDKRQSSQR. Positions 1–70 are basic; it reads MASKSNKQVT…VRNIVNKQLR (70 aa). A compositionally biased stretch (basic residues) spans 19–29; the sequence is SRSKSRARSQS. The tract at residues 71 to 263 is inner core; that stretch reads KQGVTGPKPA…CFTGYAANPN (193 aa). The segment at 394–423 is core attachment; the sequence is TRNPVTTTLQFTQMNQPSLGHGEAPAAFGR. The tract at residues 424 to 648 is P2 globular domain; it reads SIPAPGEEFK…EMLTSIPRSR (225 aa). Residues 648–668 are disordered; that stretch reads RASGHGYESDNTEYLDAPDSA. The interval 649-786 is acidic; sequence ASGHGYESDN…CTSGSRGHAE (138 aa).

This sequence belongs to the astroviridae capsid polyprotein family. Heterodimer with spike protein VP25. The spikes form a globular dimer with 30 spikes covering the mature virion. Spike protein VP25 that lacks the core attachment region may need to dimerize with spike protein VP27 to remain stably bound to the viral particle. In terms of assembly, heterodimer with spike protein VP27. The spikes form a globular dimer with 30 spikes covering the mature virion. Spike protein VP25 that lacks the core attachment region may need to dimerize with spike protein VP27 to remain stably bound to the viral particle. Interacts with host PDIA4; this interaction plays a role during virus entry into the host cell. In terms of processing, specific enzymatic cleavages by the host yield mature proteins. VP90 acidic C-terminal domain is eliminated from the immature virion by host caspases during viral maturation giving rise to virions composed of VP70. The virus can then dissociate from cellular membranes and exit the cell. Further cleavages by host extracellular proteases occur resulting in the three structural proteins VP34, VP27 and VP25 and conferring infectivity.

The protein resides in the virion. It localises to the host extracellular space. Functionally, the capsid polyprotein VP90 self-assembles and undergoes a proteolytic cleavage by host caspases to yield the immature VP70 virion. Its function is as follows. The immature virion is composed of 180 VP70 subunits with 90 dimeric spikes and displays a T=3 icosahedral symmetry. During maturation, VP70 undergoes a loss of 60 peripentonal spikes, which likely plays an important role in viral infectivity. Self-assembles to form an icosahedral capsid with a T=3 symmetry, about 43 nm in diameter. This forms contains only 30 spikes located on the icosahedral 2-fold axes. In terms of biological role, VP25 and VP27 Forms the spikes at the surface of the virion. This forms contains only 30 spikes located on the icosahedral 2-fold axes. Plays a role in the attachment to target host cell. This attachment induces virion internalization through clathrin-dependent endocytosis. Functionally, VP25 and VP27 Forms the spikes at the surface of the virion. This forms contains only 30 spikes located on the icosahedral 2-fold axes. Plays a role in the attachment to target host cell. This attachment induces virion internalization through clathrin-dependent endocytosis. The sequence is that of Capsid polyprotein VP90 from Homo sapiens (Human).